The chain runs to 281 residues: Pantothenate synthetase (281 aa).

Position 30 to 37 (Met-30 to His-37) interacts with ATP. The active-site Proton donor is His-37. Position 61 (Gln-61) interacts with (R)-pantoate. Residue Gln-61 coordinates beta-alanine. An ATP-binding site is contributed by Gly-147 to Asp-150. A (R)-pantoate-binding site is contributed by Gln-153. ATP contacts are provided by residues Val-176 and Met-184–Arg-187.

It belongs to the pantothenate synthetase family. Homodimer.

It localises to the cytoplasm. The enzyme catalyses (R)-pantoate + beta-alanine + ATP = (R)-pantothenate + AMP + diphosphate + H(+). It functions in the pathway cofactor biosynthesis; (R)-pantothenate biosynthesis; (R)-pantothenate from (R)-pantoate and beta-alanine: step 1/1. Functionally, catalyzes the condensation of pantoate with beta-alanine in an ATP-dependent reaction via a pantoyl-adenylate intermediate. This chain is Pantothenate synthetase, found in Desulfatibacillum aliphaticivorans.